We begin with the raw amino-acid sequence, 307 residues long: MSSPARPFTVRAPASSANLGPGFDSLGLSVPLYTTLRVTPQDKAEVVPLGTELADTPADESNYVYRAMTLAAKRAGRTLPPARVEIETEVPLARGLGSSAAALVAGVVAGNELLGRPLDDETVLDVTAREEGHPDNVAPALFGGIVVATLDKLGTHYVRLDPPAHLGVTVLVPDFELSTSKARAVLPREYSRADTVHALSHAALLAAALAQGRLDLLRHAMQDYVHQVWRAPLVPGLSDILEHAHEYGALGAALSGAGPTVLCFHDQRGSTATLHHYLHDVMTKNGLSGRVMDFPIDAAGTVVEHAK.

An ATP-binding site is contributed by 91-101; it reads PLARGLGSSAA.

Belongs to the GHMP kinase family. Homoserine kinase subfamily.

The protein resides in the cytoplasm. The enzyme catalyses L-homoserine + ATP = O-phospho-L-homoserine + ADP + H(+). It participates in amino-acid biosynthesis; L-threonine biosynthesis; L-threonine from L-aspartate: step 4/5. Functionally, catalyzes the ATP-dependent phosphorylation of L-homoserine to L-homoserine phosphate. In Deinococcus radiodurans (strain ATCC 13939 / DSM 20539 / JCM 16871 / CCUG 27074 / LMG 4051 / NBRC 15346 / NCIMB 9279 / VKM B-1422 / R1), this protein is Homoserine kinase.